A 341-amino-acid chain; its full sequence is Glyceraldehyde-3-phosphate dehydrogenase 2 (341 aa).

Residues 12–13, Arg-78, and Thr-120 each bind NAD(+); that span reads RI. D-glyceraldehyde 3-phosphate contacts are provided by residues 152 to 154 and Thr-183; that span reads SCT. The Nucleophile role is filled by Cys-153. Asn-184 provides a ligand contact to NAD(+). D-glyceraldehyde 3-phosphate-binding positions include Arg-198, 211–212, and Arg-234; that span reads TG. An NAD(+)-binding site is contributed by Asn-313.

Belongs to the glyceraldehyde-3-phosphate dehydrogenase family. In terms of assembly, homotetramer.

Its subcellular location is the cytoplasm. The enzyme catalyses D-glyceraldehyde 3-phosphate + phosphate + NAD(+) = (2R)-3-phospho-glyceroyl phosphate + NADH + H(+). The protein operates within carbohydrate degradation; glycolysis; pyruvate from D-glyceraldehyde 3-phosphate: step 1/5. Functionally, catalyzes the oxidative phosphorylation of glyceraldehyde 3-phosphate (G3P) to 1,3-bisphosphoglycerate (BPG) using the cofactor NAD. The first reaction step involves the formation of a hemiacetal intermediate between G3P and a cysteine residue, and this hemiacetal intermediate is then oxidized to a thioester, with concomitant reduction of NAD to NADH. The reduced NADH is then exchanged with the second NAD, and the thioester is attacked by a nucleophilic inorganic phosphate to produce BPG. The sequence is that of Glyceraldehyde-3-phosphate dehydrogenase 2 (gapA2) from Staphylococcus aureus (strain MRSA252).